Consider the following 521-residue polypeptide: Tigger transposable element-derived protein 6 (521 aa).

Residues 3-54 enclose the HTH psq-type domain; it reads NKGNKKRRQFSLEEKMKVVGAVDSGKRKGDVAKEFGITPSTLSTFLKDRTKF. 2 consecutive DNA-binding regions (H-T-H motif) follow at residues 30 to 50 and 99 to 130; these read KGDV…FLKD and SVIR…FRDR. Residues 66-137 enclose the HTH CENPB-type domain; the sequence is QRKRMRSALY…RDRHGIALKA (72 aa). One can recognise a DDE-1 domain in the interval 170–372; the sequence is YSPDDIFNAD…VKPSTVVKCW (203 aa).

It belongs to the tigger transposable element derived protein family.

The protein localises to the nucleus. The protein is Tigger transposable element-derived protein 6 (TIGD6) of Homo sapiens (Human).